The sequence spans 1258 residues: Regulator of G-protein signaling 22 (1258 aa).

A disordered region spans residues 581–604 (QQLGRSEPLNAVSSKDGGLEKGSK). RGS domains lie at 845-973 (TFTD…ASRQ) and 1014-1138 (AFRK…TDEK). The tract at residues 1145-1172 (RRQEHKQKRKASDTEEDKAGKSGVKQYA) is disordered. Residues 1154–1164 (KASDTEEDKAG) are compositionally biased toward basic and acidic residues.

In terms of assembly, interacts with GNA11, GNA12 and GNA13. In terms of tissue distribution, expressed testis, including in Leydig cells and spermatogenic cells from the spermatogonia to spermatid stages (at protein level).

Its subcellular location is the cytoplasm. It localises to the nucleus. Its function is as follows. Inhibits signal transduction by increasing the GTPase activity of G protein alpha subunits thereby driving them into their inactive GDP-bound form. The polypeptide is Regulator of G-protein signaling 22 (Rgs22) (Mus musculus (Mouse)).